Reading from the N-terminus, the 349-residue chain is Phosphoribosylformylglycinamidine cyclo-ligase (349 aa).

This sequence belongs to the AIR synthase family.

The protein resides in the cytoplasm. It catalyses the reaction 2-formamido-N(1)-(5-O-phospho-beta-D-ribosyl)acetamidine + ATP = 5-amino-1-(5-phospho-beta-D-ribosyl)imidazole + ADP + phosphate + H(+). The protein operates within purine metabolism; IMP biosynthesis via de novo pathway; 5-amino-1-(5-phospho-D-ribosyl)imidazole from N(2)-formyl-N(1)-(5-phospho-D-ribosyl)glycinamide: step 2/2. The sequence is that of Phosphoribosylformylglycinamidine cyclo-ligase from Psychrobacter arcticus (strain DSM 17307 / VKM B-2377 / 273-4).